The primary structure comprises 388 residues: Mannitol-1-phosphate 5-dehydrogenase (388 aa).

5 to 16 (AIQFGGGNIGRG) lines the NAD(+) pocket. Lys-213 is a catalytic residue.

This sequence belongs to the mannitol dehydrogenase family. In terms of assembly, monomer.

It carries out the reaction D-mannitol 1-phosphate + NAD(+) = beta-D-fructose 6-phosphate + NADH + H(+). Catalyzes the NAD(H)-dependent interconversion of D-fructose 6-phosphate and D-mannitol 1-phosphate in the mannitol metabolic pathway. Has a strong preference for NADH over NADPH. Required for protection of conidiospores against exogenous stresses such as high temperatures and an oxidative environment. In Aspergillus niger, this protein is Mannitol-1-phosphate 5-dehydrogenase (mpdA).